The following is a 55-amino-acid chain: ATP synthase protein 8 (55 aa).

A helical membrane pass occupies residues 7–28; that stretch reads ISWFFNFLLAWFFLFIVVTILL.

Belongs to the ATPase protein 8 family. As to quaternary structure, F-type ATPases have 2 components, CF(1) - the catalytic core - and CF(0) - the membrane proton channel.

The protein resides in the mitochondrion membrane. In terms of biological role, mitochondrial membrane ATP synthase (F(1)F(0) ATP synthase or Complex V) produces ATP from ADP in the presence of a proton gradient across the membrane which is generated by electron transport complexes of the respiratory chain. F-type ATPases consist of two structural domains, F(1) - containing the extramembraneous catalytic core and F(0) - containing the membrane proton channel, linked together by a central stalk and a peripheral stalk. During catalysis, ATP synthesis in the catalytic domain of F(1) is coupled via a rotary mechanism of the central stalk subunits to proton translocation. Part of the complex F(0) domain. Minor subunit located with subunit a in the membrane. This is ATP synthase protein 8 (MT-ATP8) from Pisaster ochraceus (Ochre sea star).